A 217-amino-acid chain; its full sequence is Probable transaldolase (217 aa).

The active-site Schiff-base intermediate with substrate is the Lys-83.

It belongs to the transaldolase family. Type 3B subfamily.

The protein resides in the cytoplasm. The enzyme catalyses D-sedoheptulose 7-phosphate + D-glyceraldehyde 3-phosphate = D-erythrose 4-phosphate + beta-D-fructose 6-phosphate. Its pathway is carbohydrate degradation; pentose phosphate pathway; D-glyceraldehyde 3-phosphate and beta-D-fructose 6-phosphate from D-ribose 5-phosphate and D-xylulose 5-phosphate (non-oxidative stage): step 2/3. Functionally, transaldolase is important for the balance of metabolites in the pentose-phosphate pathway. This Caldicellulosiruptor saccharolyticus (strain ATCC 43494 / DSM 8903 / Tp8T 6331) protein is Probable transaldolase.